Here is a 655-residue protein sequence, read N- to C-terminus: MGTSASSITALASCSRIAGQVGATMVAGSLLLLGFLSTITAQPEQKTLSLTGTYRHVDRTTGQVLTCDKCPAGTYVSEHCTNTSLRVCSSCPSGTFTRHENGIERCHDCSQPCPRPMIERLPCAALTDRECICPPGMYQSNGTCAPHTVCPVGWGVRKKGTENEDVRCKQCARGTFSDVPSSVMKCRAHTDCLGQNLMVVKQGTKETDNVCGVHLSSSSTTPSSPGIATFSHPEHTESHDVPSSTYEPQGMNSTDSNSTASVRTKVPSDIQEETVPDNTSSTSGKESTNRTLPNPPQLTHQQGPHHRHILKLLPSSMEATGEKSSTAIKAPKRGHPRQNPHKHFDINEHLPWMIVLFLLLVLVLIVVCSIRKSSRTLKKGPRQDPSAIMEKAGLKKSLTPTQNREKWIYYRNGHGIDILKLVAAQVGSQWKDIYQFLCNASEREVAAFSNGYTADHERAYAALQHWTIRGPEASLAQLISALRQHRRNDVVEKIRGLMEDTTQLETDKLALPMSPSPLSPSPIPSPNVKLENSTLLTVEPSPLDKNKGFFVDESEPLLRCDSTSSGSSALSRNGSFITKEKKDTVLRQVRLDPCDLQPIFDDMLHILNPEELRVIEEIPQAEDKLDRLFEIIGVKSQEASQTLLDSVYSHLPDLL.

The N-terminal stretch at 1–41 is a signal peptide; that stretch reads MGTSASSITALASCSRIAGQVGATMVAGSLLLLGFLSTITA. Residues 42–349 are Extracellular-facing; that stretch reads QPEQKTLSLT…PHKHFDINEH (308 aa). TNFR-Cys repeat units lie at residues 50-88, 90-131, 133-167, and 170-211; these read LTGT…LRVC, SCPS…DREC, CPPG…EDVR, and QCAR…DNVC. 9 disulfides stabilise this stretch: Cys67–Cys80, Cys70–Cys88, Cys91–Cys106, Cys109–Cys123, Cys113–Cys131, Cys133–Cys144, Cys150–Cys168, Cys171–Cys186, and Cys192–Cys211. N-linked (GlcNAc...) asparagine glycosylation is present at Asn82. Disordered regions lie at residues 214-306 and 318-338; these read HLSS…GPHH and EATG…HPRQ. The span at 216 to 225 shows a compositional bias: low complexity; it reads SSSSTTPSSP. Composition is skewed to polar residues over residues 241–262 and 276–302; these read VPSS…TASV and PDNT…THQQ. Residues Asn252, Asn278, and Asn289 are each glycosylated (N-linked (GlcNAc...) asparagine). A helical membrane pass occupies residues 350–370; the sequence is LPWMIVLFLLLVLVLIVVCSI. Cys368 is lipidated: S-palmitoyl cysteine. The Cytoplasmic portion of the chain corresponds to 371-655; that stretch reads RKSSRTLKKG…SVYSHLPDLL (285 aa). A Death domain is found at 415-498; that stretch reads GIDILKLVAA…DVVEKIRGLM (84 aa).

Associates with TRADD. Interacts with NGFR. Interacts with CASP8. In terms of processing, oxidized in response to reactive oxygen species (ROS), leading to endocytosis. Detected in brain (at protein level). Detected in corpus callosum oligodendrocytes. Detected in embryonic and adult brain.

It localises to the cell membrane. Promotes apoptosis, possibly via a pathway that involves the activation of NF-kappa-B. Can also promote apoptosis mediated by BAX and by the release of cytochrome c from the mitochondria into the cytoplasm. Trophic-factor deprivation triggers the cleavage of surface APP by beta-secretase to release sAPP-beta which is further cleaved to release an N-terminal fragment of APP (N-APP). Negatively regulates oligodendrocyte survival, maturation and myelination. Plays a role in signaling cascades triggered by stimulation of T-cell receptors, in the adaptive immune response and in the regulation of T-cell differentiation and proliferation. Negatively regulates T-cell responses and the release of cytokines such as IL4, IL5, IL10, IL13 and IFNG by Th2 cells. Negatively regulates the production of IgG, IgM and IgM in response to antigens. May inhibit the activation of JNK in response to T-cell stimulation. Also acts as a regulator of pyroptosis: recruits CASP8 in response to reactive oxygen species (ROS) and subsequent oxidation, leading to activation of GSDMC. The chain is Tumor necrosis factor receptor superfamily member 21 (Tnfrsf21) from Rattus norvegicus (Rat).